Reading from the N-terminus, the 171-residue chain is Large ribosomal subunit protein bL17 (171 aa).

Basic and acidic residues predominate over residues 140-152 (KREIQTKAREEKR). The interval 140 to 171 (KREIQTKAREEKRATRKSNSAPVSKETTSKKK) is disordered. Polar residues predominate over residues 156 to 165 (KSNSAPVSKE).

The protein belongs to the bacterial ribosomal protein bL17 family. As to quaternary structure, part of the 50S ribosomal subunit. Contacts protein L32.

This chain is Large ribosomal subunit protein bL17, found in Leptospira interrogans serogroup Icterohaemorrhagiae serovar copenhageni (strain Fiocruz L1-130).